A 388-amino-acid polypeptide reads, in one-letter code: Envelope protein F13 homolog (388 aa).

The N-myristoyl glycine; by host moiety is linked to residue Gly-2. The 28-residue stretch at 310–337 (GDAINNTKLLVVDDEYVHVSNADIDGTH) folds into the PLD phosphodiesterase domain.

It localises to the virion membrane. The protein localises to the host endoplasmic reticulum membrane. In terms of biological role, envelope protein associated with the inner side of the enveloped virion (EV) membrane. In Molluscum contagiosum virus subtype 2 (MOCV), this protein is Envelope protein F13 homolog (P43K).